Consider the following 274-residue polypeptide: Oxidized low-density lipoprotein receptor 1 (274 aa).

Residues 1–28 are disordered; it reads MTLDDLKSNSMKDQPDEKSNGDKAEGPR. At 1-37 the chain is on the cytoplasmic side; it reads MTLDDLKSNSMKDQPDEKSNGDKAEGPRSLSTLRWRP. The span at 13-26 shows a compositional bias: basic and acidic residues; that stretch reads DQPDEKSNGDKAEG. The helical; Signal-anchor for type II membrane protein transmembrane segment at 38-60 threads the bilayer; that stretch reads AALILGLLCLGLLVTVILLIIQL. Residue cysteine 46 is the site of S-palmitoyl cysteine attachment. A neck region spans residues 61-150; sequence SQVSDLLKQQ…SGPCPQDWLW (90 aa). The Extracellular segment spans residues 61 to 274; it reads SQVSDLLKQQ…QKRANLLRAQ (214 aa). The stretch at 89–142 forms a coiled coil; the sequence is RQAEKSSQESQRELTEMIETLAHKLDEKSKKLMELQQQNLNLQKALEKAANFSG. N-linked (GlcNAc...) asparagine glycosylation is present at asparagine 139. Cystine bridges form between cysteine 144/cysteine 155, cysteine 172/cysteine 264, and cysteine 243/cysteine 256. Residues 151–265 form the C-type lectin domain; sequence HEENCYKFSS…CILNAFSICQ (115 aa).

Homodimer; disulfide-linked. May form a hexamer composed of 3 homodimers. Interacts with HSP70. Post-translationally, N-glycosylated.

It is found in the cell membrane. It localises to the membrane raft. The protein localises to the secreted. In terms of biological role, receptor that mediates the recognition, internalization and degradation of oxidatively modified low density lipoprotein (oxLDL) by vascular endothelial cells. OxLDL is a marker of atherosclerosis that induces vascular endothelial cell activation and dysfunction, resulting in pro-inflammatory responses, pro-oxidative conditions and apoptosis. Its association with oxLDL induces the activation of NF-kappa-B through an increased production of intracellular reactive oxygen and a variety of pro-atherogenic cellular responses including a reduction of nitric oxide (NO) release, monocyte adhesion and apoptosis. In addition to binding oxLDL, it acts as a receptor for the HSP70 protein involved in antigen cross-presentation to naive T-cells in dendritic cells, thereby participating in cell-mediated antigen cross-presentation. Also involved in inflammatory process, by acting as a leukocyte-adhesion molecule at the vascular interface in endotoxin-induced inflammation. Also acts as a receptor for advanced glycation end (AGE) products, activated platelets, monocytes, apoptotic cells and both Gram-negative and Gram-positive bacteria. This chain is Oxidized low-density lipoprotein receptor 1 (OLR1), found in Sus scrofa (Pig).